The primary structure comprises 122 residues: Large ribosomal subunit protein uL14c (122 aa).

This sequence belongs to the universal ribosomal protein uL14 family. In terms of assembly, part of the 50S ribosomal subunit.

It localises to the plastid. Its subcellular location is the chloroplast. Binds to 23S rRNA. This chain is Large ribosomal subunit protein uL14c, found in Liriodendron tulipifera (Tuliptree).